Here is a 563-residue protein sequence, read N- to C-terminus: Arginine--tRNA ligase (563 aa).

A 'HIGH' region motif is present at residues proline 121–histidine 131.

Belongs to the class-I aminoacyl-tRNA synthetase family. As to quaternary structure, monomer.

The protein localises to the cytoplasm. The catalysed reaction is tRNA(Arg) + L-arginine + ATP = L-arginyl-tRNA(Arg) + AMP + diphosphate. This chain is Arginine--tRNA ligase, found in Streptococcus pyogenes serotype M1.